Reading from the N-terminus, the 248-residue chain is Ribonuclease PH (248 aa).

Phosphate is bound by residues Arg-86 and 124–126 (GTR).

Belongs to the RNase PH family. Homohexameric ring arranged as a trimer of dimers.

It carries out the reaction tRNA(n+1) + phosphate = tRNA(n) + a ribonucleoside 5'-diphosphate. In terms of biological role, phosphorolytic 3'-5' exoribonuclease that plays an important role in tRNA 3'-end maturation. Removes nucleotide residues following the 3'-CCA terminus of tRNAs; can also add nucleotides to the ends of RNA molecules by using nucleoside diphosphates as substrates, but this may not be physiologically important. Probably plays a role in initiation of 16S rRNA degradation (leading to ribosome degradation) during starvation. This is Ribonuclease PH from Listeria monocytogenes serotype 4b (strain CLIP80459).